A 381-amino-acid chain; its full sequence is Succinate--CoA ligase [ADP-forming] subunit beta (381 aa).

One can recognise an ATP-grasp domain in the interval K9 to K236. ATP-binding positions include K45, G52–G54, E91, V94, and E99. Residues N191 and D205 each contribute to the Mg(2+) site. Residues N256 and G313–T315 each bind substrate.

This sequence belongs to the succinate/malate CoA ligase beta subunit family. Heterotetramer of two alpha and two beta subunits. Mg(2+) is required as a cofactor.

The enzyme catalyses succinate + ATP + CoA = succinyl-CoA + ADP + phosphate. The catalysed reaction is GTP + succinate + CoA = succinyl-CoA + GDP + phosphate. Its pathway is carbohydrate metabolism; tricarboxylic acid cycle; succinate from succinyl-CoA (ligase route): step 1/1. Its function is as follows. Succinyl-CoA synthetase functions in the citric acid cycle (TCA), coupling the hydrolysis of succinyl-CoA to the synthesis of either ATP or GTP and thus represents the only step of substrate-level phosphorylation in the TCA. The beta subunit provides nucleotide specificity of the enzyme and binds the substrate succinate, while the binding sites for coenzyme A and phosphate are found in the alpha subunit. This is Succinate--CoA ligase [ADP-forming] subunit beta from Halorubrum lacusprofundi (strain ATCC 49239 / DSM 5036 / JCM 8891 / ACAM 34).